The primary structure comprises 210 residues: Thymidylate kinase (210 aa).

11–18 (GLEGAGKS) serves as a coordination point for ATP.

It belongs to the thymidylate kinase family.

The enzyme catalyses dTMP + ATP = dTDP + ADP. Its function is as follows. Phosphorylation of dTMP to form dTDP in both de novo and salvage pathways of dTTP synthesis. In Histophilus somni (strain 129Pt) (Haemophilus somnus), this protein is Thymidylate kinase.